We begin with the raw amino-acid sequence, 663 residues long: Probable receptor-like protein kinase At1g49730 (663 aa).

An N-terminal signal peptide occupies residues 1-25; that stretch reads MVVNSQAFLLALIALLATQLPSLMA. Topologically, residues 26 to 254 are extracellular; that stretch reads ADCPLDFSGS…TNPYHLTMVP (229 aa). Residues Asn-36, Asn-46, Asn-70, Asn-101, and Asn-171 are each glycosylated (N-linked (GlcNAc...) asparagine). Residues 213 to 243 form a disordered region; that stretch reads SFSPVASPEPSPSTVGGISPSNSDSQMTTSR. Over residues 224–243 the composition is skewed to polar residues; that stretch reads PSTVGGISPSNSDSQMTTSR. The helical transmembrane segment at 255–275 threads the bilayer; it reads TIGIVVTAVALTMLVVLVILI. The Cytoplasmic portion of the chain corresponds to 276–663; that stretch reads RRKNRELDES…PHSPINGFSF (388 aa). Residues 327-609 form the Protein kinase domain; that stretch reads NDFNTVIGQG…ESCDPVHSAF (283 aa). ATP-binding positions include 333-341 and Lys-355; that span reads IGQGGFGTV. Catalysis depends on Asp-451, which acts as the Proton acceptor. The tract at residues 631-663 is disordered; sequence RGDSRIFGPSSSTTSRSHYSRSLPHSPINGFSF. Positions 640–652 are enriched in low complexity; sequence SSSTTSRSHYSRS.

Belongs to the protein kinase superfamily. Ser/Thr protein kinase family.

It localises to the cell membrane. The catalysed reaction is L-seryl-[protein] + ATP = O-phospho-L-seryl-[protein] + ADP + H(+). It carries out the reaction L-threonyl-[protein] + ATP = O-phospho-L-threonyl-[protein] + ADP + H(+). The protein is Probable receptor-like protein kinase At1g49730 of Arabidopsis thaliana (Mouse-ear cress).